A 212-amino-acid chain; its full sequence is Octanoyltransferase (212 aa).

The region spanning 31-209 (AETQDEIWLV…HFANLLGYNI (179 aa)) is the BPL/LPL catalytic domain. Substrate is bound by residues 70–77 (RGGQITYH), 138–140 (SLG), and 151–153 (GLA). The Acyl-thioester intermediate role is filled by C169.

This sequence belongs to the LipB family.

Its subcellular location is the cytoplasm. It catalyses the reaction octanoyl-[ACP] + L-lysyl-[protein] = N(6)-octanoyl-L-lysyl-[protein] + holo-[ACP] + H(+). The protein operates within protein modification; protein lipoylation via endogenous pathway; protein N(6)-(lipoyl)lysine from octanoyl-[acyl-carrier-protein]: step 1/2. Its function is as follows. Catalyzes the transfer of endogenously produced octanoic acid from octanoyl-acyl-carrier-protein onto the lipoyl domains of lipoate-dependent enzymes. Lipoyl-ACP can also act as a substrate although octanoyl-ACP is likely to be the physiological substrate. The protein is Octanoyltransferase of Haemophilus influenzae (strain ATCC 51907 / DSM 11121 / KW20 / Rd).